The following is a 567-amino-acid chain: MSKIDRKAYADMFGPTVGDRVRLADTELWIEVEKDFTIYGEEVKFGGGKVIRDGMGQSQASCADTPDTVITNALILDHWGIVKADVAIKNGRIATIGKAGNPDIQPGVTIEVGPGTEVIAGEGQILTAGGIDAHIHFICPQQIEEALTSGVTTMIGGGTGPATGTNATTCTPGPWHIQKMLQAGEAFPMNLGFLAKGNASLPTALNEQVEAGALGLKLHEDWGTTPAAIDCCLTVAENYDVQVAIHTDTLNESGFVEDTLAAFKDRTIHTYHTEGAGGGHAPDIIKACGSDNVLPSSTNPTRPYTVNTVDEHLDMLMVCHHLDPNIPEDVAFADSRIRKETIAAEDILHDLGAFSMISSDSQAMGRVGEVVCRTWQTAHKMKVQRGPLAEDSSYSDNFRARRYIAKYTINPALAHGIAHEVGSVEVGKLADLVLWKPAFFGVKPSLIIKGGAIAAAPMGDPNASIPTPQPVHYRHMFGAFGRACTGTSVSFVSQAALDAGIAASYQLERRLVAVKNCRSVKKKDMVLNHYQPVMEVDPETYEVRADGQLLTCEPAEVLPMAQRYFLF.

The region spanning 129–567 (GGIDAHIHFI…LPMAQRYFLF (439 aa)) is the Urease domain. Ni(2+) contacts are provided by H134, H136, and K217. The residue at position 217 (K217) is an N6-carboxylysine. Position 219 (H219) interacts with substrate. 2 residues coordinate Ni(2+): H246 and H272. The active-site Proton donor is H320. D360 provides a ligand contact to Ni(2+).

This sequence belongs to the metallo-dependent hydrolases superfamily. Urease alpha subunit family. Heterotrimer of UreA (gamma), UreB (beta) and UreC (alpha) subunits. Three heterotrimers associate to form the active enzyme. The cofactor is Ni cation. Carboxylation allows a single lysine to coordinate two nickel ions.

It localises to the cytoplasm. The enzyme catalyses urea + 2 H2O + H(+) = hydrogencarbonate + 2 NH4(+). It participates in nitrogen metabolism; urea degradation; CO(2) and NH(3) from urea (urease route): step 1/1. The sequence is that of Urease subunit alpha from Teredinibacter turnerae (strain ATCC 39867 / T7901).